We begin with the raw amino-acid sequence, 238 residues long: Aerobic respiration control protein ArcA (238 aa).

In terms of domain architecture, Response regulatory spans 5–118 (HILIVEDELV…ELTIRARNLL (114 aa)). Asp54 is modified (4-aspartylphosphate). The ompR/PhoB-type DNA-binding region spans 134–234 (VESYKFNGWE…IHGEGYRFCG (101 aa)).

Post-translationally, phosphorylated by ArcB.

It is found in the cytoplasm. Member of the two-component regulatory system ArcB/ArcA. Represses a wide variety of aerobic enzymes under anaerobic conditions. It may also be involved in the osmoregulation of envelope proteins. When activated by ArcB, it negatively regulates the expression of genes of aerobic function. Activates the transcription of the plfB operon by binding to its promoter. The chain is Aerobic respiration control protein ArcA (arcA) from Escherichia coli O157:H7.